The sequence spans 275 residues: Small ribosomal subunit protein uS3 (275 aa).

The 69-residue stretch at 38–106 (IRRLLSSGLE…QVQLNILEVK (69 aa)) folds into the KH type-2 domain. Residues 217–275 (AVPAGADRPRRERPAGSRPRRSGASGTTATGTEAGRAVGSEEPAAAESATTPEAQSTES) form a disordered region. Positions 238-275 (SGASGTTATGTEAGRAVGSEEPAAAESATTPEAQSTES) are enriched in low complexity.

It belongs to the universal ribosomal protein uS3 family. As to quaternary structure, part of the 30S ribosomal subunit. Forms a tight complex with proteins S10 and S14.

Its function is as follows. Binds the lower part of the 30S subunit head. Binds mRNA in the 70S ribosome, positioning it for translation. This Mycobacterium marinum (strain ATCC BAA-535 / M) protein is Small ribosomal subunit protein uS3.